Reading from the N-terminus, the 116-residue chain is Small ribosomal subunit protein uS13m (116 aa).

The segment at 92 to 116 is disordered; it reads HQDGSPLRGQRTHTNARTARKQIRK.

Belongs to the universal ribosomal protein uS13 family. As to quaternary structure, part of the small ribosomal subunit.

Its subcellular location is the mitochondrion. Functionally, located at the top of the head of the small subunit, it contacts several helices of the 18S rRNA. The chain is Small ribosomal subunit protein uS13m (RPS13) from Triticum aestivum (Wheat).